Here is a 640-residue protein sequence, read N- to C-terminus: PTS system mannitol-specific EIICBA component (640 aa).

In terms of domain architecture, PTS EIIC type-2 spans 12–343; sequence LGRFLSAMIM…LKISNRNHYV (332 aa). The next 6 helical transmembrane spans lie at 24-45, 50-70, 134-155, 165-185, 273-292, and 313-334; these read ISVF…WCPN, KVLS…TGGY, SVGI…PMIE, VNLM…EPAK, LILG…GGLI, and VINL…CMLL. The 97-residue stretch at 379–475 folds into the PTS EIIB type-2 domain; sequence RNIIFACDAG…YLVENNLDNN (97 aa). C385 serves as the catalytic Phosphocysteine intermediate; for EIIB activity. C385 carries the post-translational modification Phosphocysteine; by EIIA. Residues 496-638 enclose the PTS EIIA type-2 domain; the sequence is FSLTKENIFL…DDVLYLFSRK (143 aa). H556 functions as the Tele-phosphohistidine intermediate; for EIIA activity in the catalytic mechanism. Position 556 is a phosphohistidine; by HPr (H556).

As to quaternary structure, homodimer. An intramolecular phosphotransfer takes places between His-556 and Cys-385.

It is found in the cell inner membrane. It carries out the reaction D-mannitol(out) + N(pros)-phospho-L-histidyl-[protein] = D-mannitol 1-phosphate(in) + L-histidyl-[protein]. In terms of biological role, the phosphoenolpyruvate-dependent sugar phosphotransferase system (sugar PTS), a major carbohydrate active transport system, catalyzes the phosphorylation of incoming sugar substrates concomitantly with their translocation across the cell membrane. This system is involved in D-mannitol transport. This is PTS system mannitol-specific EIICBA component (mtlA) from Buchnera aphidicola subsp. Baizongia pistaciae (strain Bp).